The sequence spans 670 residues: Solute carrier organic anion transporter family member 1A6 (670 aa).

Topologically, residues Met1–Lys20 are cytoplasmic. The helical transmembrane segment at Val21 to Met40 threads the bilayer. Residues Asn41–Gly59 are Extracellular-facing. An N-linked (GlcNAc...) asparagine glycan is attached at Asn52. A helical transmembrane segment spans residues Leu60–Gly80. Residues Arg81–Pro86 are Cytoplasmic-facing. The helical transmembrane segment at Ile87 to Gly111 threads the bilayer. The Extracellular portion of the chain corresponds to Arg112–Ser155. Residues Asn124 and Asn135 are each glycosylated (N-linked (GlcNAc...) asparagine). A helical membrane pass occupies residues Leu156–Glu184. Residues Asp185–Lys203 lie on the Cytoplasmic side of the membrane. The chain crosses the membrane as a helical span at residues Ile204–Met224. Residues Gly225–Val242 lie on the Extracellular side of the membrane. Residues Gly243 to Pro267 form a helical membrane-spanning segment. The Cytoplasmic portion of the chain corresponds to Lys268–Ser311. The disordered stretch occupies residues Glu276–Lys295. Residues Leu312–Val333 traverse the membrane as a helical segment. The Extracellular portion of the chain corresponds to Ser334–Glu353. The helical transmembrane segment at Ala354–Met377 threads the bilayer. Topologically, residues Lys378–Lys381 are cytoplasmic. A helical transmembrane segment spans residues Ile382–Asn405. Residues Phe406–Phe513 are Extracellular-facing. In terms of domain architecture, Kazal-like spans Asn433–Gln488. Cystine bridges form between Cys439-Cys469, Cys445-Cys465, and Cys454-Cys486. A glycan (N-linked (GlcNAc...) asparagine) is linked at Asn492. Residues Leu514 to Leu536 traverse the membrane as a helical segment. The Cytoplasmic portion of the chain corresponds to Arg537 to Ser545. The chain crosses the membrane as a helical span at residues Leu546 to Ile571. Over Asp572 to Pro605 the chain is Extracellular. Residues Ala606–Met623 form a helical membrane-spanning segment. Topologically, residues Arg624 to Leu670 are cytoplasmic. Ser634 carries the post-translational modification Phosphoserine. Residues Lys647–Leu670 are disordered.

Belongs to the organo anion transporter (TC 2.A.60) family.

The protein resides in the cell membrane. May mediate the Na(+)-independent transport of organic anions. The polypeptide is Solute carrier organic anion transporter family member 1A6 (Slco1a6) (Rattus norvegicus (Rat)).